Reading from the N-terminus, the 96-residue chain is Defensin-like protein 69 (96 aa).

Residues 1-19 (MGSSKLLVAFTLIVMMTIS) form the signal peptide. Intrachain disulfides connect Cys-37/Cys-86, Cys-41/Cys-64, Cys-50/Cys-84, and Cys-54/Cys-85.

Belongs to the DEFL family.

The protein localises to the secreted. This chain is Defensin-like protein 69, found in Arabidopsis thaliana (Mouse-ear cress).